A 986-amino-acid polypeptide reads, in one-letter code: MRIRVSYLLVLCFTLIWFRWTVVYSSFSDLDALLKLKESMKGAKAKHHALEDWKFSTSLSAHCSFSGVTCDQNLRVVALNVTLVPLFGHLPPEIGLLEKLENLTISMNNLTDQLPSDLASLTSLKVLNISHNLFSGQFPGNITVGMTELEALDAYDNSFSGPLPEEIVKLEKLKYLHLAGNYFSGTIPESYSEFQSLEFLGLNANSLTGRVPESLAKLKTLKELHLGYSNAYEGGIPPAFGSMENLRLLEMANCNLTGEIPPSLGNLTKLHSLFVQMNNLTGTIPPELSSMMSLMSLDLSINDLTGEIPESFSKLKNLTLMNFFQNKFRGSLPSFIGDLPNLETLQVWENNFSFVLPHNLGGNGRFLYFDVTKNHLTGLIPPDLCKSGRLKTFIITDNFFRGPIPKGIGECRSLTKIRVANNFLDGPVPPGVFQLPSVTITELSNNRLNGELPSVISGESLGTLTLSNNLFTGKIPAAMKNLRALQSLSLDANEFIGEIPGGVFEIPMLTKVNISGNNLTGPIPTTITHRASLTAVDLSRNNLAGEVPKGMKNLMDLSILNLSRNEISGPVPDEIRFMTSLTTLDLSSNNFTGTVPTGGQFLVFNYDKTFAGNPNLCFPHRASCPSVLYDSLRKTRAKTARVRAIVIGIALATAVLLVAVTVHVVRKRRLHRAQAWKLTAFQRLEIKAEDVVECLKEENIIGKGGAGIVYRGSMPNGTDVAIKRLVGQGSGRNDYGFRAEIETLGKIRHRNIMRLLGYVSNKDTNLLLYEYMPNGSLGEWLHGAKGGHLRWEMRYKIAVEAARGLCYMHHDCSPLIIHRDVKSNNILLDADFEAHVADFGLAKFLYDPGASQSMSSIAGSYGYIAPEYAYTLKVDEKSDVYSFGVVLLELIIGRKPVGEFGDGVDIVGWVNKTMSELSQPSDTALVLAVVDPRLSGYPLTSVIHMFNIAMMCVKEMGPARPTMREVVHMLTNPPQSNTSTQDLINL.

A signal peptide spans 1–25; sequence MRIRVSYLLVLCFTLIWFRWTVVYS. 21 LRR repeats span residues 71-97, 98-121, 123-145, 146-170, 171-196, 198-218, 243-267, 268-291, 293-314, 316-339, 340-363, 365-387, 388-411, 412-435, 437-458, 459-482, 483-506, 508-530, 531-554, 555-578, and 579-603; these read DQNLRVVALNVTLVPLFGHLPPEIGLL, EKLENLTISMNNLTDQLPSDLASL, SLKVLNISHNLFSGQFPGNITVG, MTELEALDAYDNSFSGPLPEEIVKL, EKLKYLHLAGNYFSGTIPESYSEFQS, EFLGLNANSLTGRVPESLAKL, MENLRLLEMANCNLTGEIPPSLGNL, TKLHSLFVQMNNLTGTIPPELSSM, SLMSLDLSINDLTGEIPESFSK, KNLTLMNFFQNKFRGSLPSFIGDL, PNLETLQVWENNFSFVLPHNLGGN, RFLYFDVTKNHLTGLIPPDLCKS, GRLKTFIITDNFFRGPIPKGIGEC, RSLTKIRVANNFLDGPVPPGVFQL, SVTITELSNNRLNGELPSVISG, ESLGTLTLSNNLFTGKIPAAMKNL, RALQSLSLDANEFIGEIPGGVFEI, MLTKVNISGNNLTGPIPTTITHR, ASLTAVDLSRNNLAGEVPKGMKNL, MDLSILNLSRNEISGPVPDEIRFM, and TSLTTLDLSSNNFTGTVPTGGQFLV. N-linked (GlcNAc...) asparagine glycosylation is found at asparagine 80, asparagine 102, asparagine 109, asparagine 128, and asparagine 141. Residues asparagine 255, asparagine 266, and asparagine 279 are each glycosylated (N-linked (GlcNAc...) asparagine). Residues asparagine 317 and asparagine 351 are each glycosylated (N-linked (GlcNAc...) asparagine). N-linked (GlcNAc...) asparagine glycosylation is found at asparagine 513 and asparagine 518. N-linked (GlcNAc...) asparagine glycosylation is found at asparagine 561 and asparagine 590. A helical transmembrane segment spans residues 645–665; it reads IVIGIALATAVLLVAVTVHVV. The 277-residue stretch at 695-971 folds into the Protein kinase domain; that stretch reads LKEENIIGKG…TMREVVHMLT (277 aa). Residues 701–709 and lysine 723 each bind ATP; that span reads IGKGGAGIV. Aspartate 820 serves as the catalytic Proton acceptor.

The protein belongs to the protein kinase superfamily. Ser/Thr protein kinase family. Expressed in roots, leaves, stems and flowers.

The protein localises to the cell membrane. It catalyses the reaction L-seryl-[protein] + ATP = O-phospho-L-seryl-[protein] + ADP + H(+). The catalysed reaction is L-threonyl-[protein] + ATP = O-phospho-L-threonyl-[protein] + ADP + H(+). In terms of biological role, LRR receptor kinase involved in the regulation of root and shoot growth, and root nodule organogenesis. Involved in long distance nodulation signaling events. Involved in the autoregulation of nodulation (AON), a long distance systemic signaling from root to shoot and back again, which allows legumes to limit the number of root nodules formed based on available nitrogen and previous rhizobial colonization. Acts from shoot to root to control AON. Involved in the regulation of root colonization by arbuscular mycorrhizal (AM) fungi. The chain is Leucine-rich repeat receptor-like kinase protein HAR1 from Lotus japonicus (Lotus corniculatus var. japonicus).